The chain runs to 239 residues: Non-classical arabinogalactan protein 30 (239 aa).

An N-terminal signal peptide occupies residues 1–24; sequence MGIIGKSVSLTLFALLCFTSSVFT. Asn-106 is a glycosylation site (N-linked (GlcNAc...) asparagine).

The protein belongs to the non-classical AGP family. As to expression, specifically expressed in root tips.

The protein resides in the secreted. The protein localises to the cell wall. Proteoglycan required for the timing of seed germination. May function in the abscisic acid (ABA) response. This Arabidopsis thaliana (Mouse-ear cress) protein is Non-classical arabinogalactan protein 30.